Reading from the N-terminus, the 326-residue chain is Biotin synthase (326 aa).

The Radical SAM core domain occupies 48 to 277; it reads FGAGKVDLCS…SARIRMAGGR (230 aa). Positions 66, 70, and 73 each coordinate [4Fe-4S] cluster. S110, C142, C202, and R272 together coordinate [2Fe-2S] cluster.

Belongs to the radical SAM superfamily. Biotin synthase family. As to quaternary structure, homodimer. Requires [4Fe-4S] cluster as cofactor. The cofactor is [2Fe-2S] cluster.

The enzyme catalyses (4R,5S)-dethiobiotin + (sulfur carrier)-SH + 2 reduced [2Fe-2S]-[ferredoxin] + 2 S-adenosyl-L-methionine = (sulfur carrier)-H + biotin + 2 5'-deoxyadenosine + 2 L-methionine + 2 oxidized [2Fe-2S]-[ferredoxin]. It functions in the pathway cofactor biosynthesis; biotin biosynthesis; biotin from 7,8-diaminononanoate: step 2/2. Catalyzes the conversion of dethiobiotin (DTB) to biotin by the insertion of a sulfur atom into dethiobiotin via a radical-based mechanism. The protein is Biotin synthase of Heliobacterium modesticaldum (strain ATCC 51547 / Ice1).